We begin with the raw amino-acid sequence, 317 residues long: Peroxidase 22.3 (317 aa).

Positions 1 to 25 (MASATNSSLSLMLLVAAAMASVASA) are cleaved as a signal peptide. Gln-26 carries the post-translational modification Pyrrolidone carboxylic acid. Cystine bridges form between Cys-36-Cys-111 and Cys-69-Cys-74. The active-site Proton acceptor is the His-67. Ca(2+) contacts are provided by Asp-68, Val-71, Gly-73, Asp-75, and Ser-77. N-linked (GlcNAc...) asparagine glycosylation occurs at Asn-112. Cystine bridges form between Cys-117/Cys-312 and Cys-196/Cys-221. Pro-159 is a binding site for substrate. N-linked (GlcNAc...) asparagine glycosylation occurs at Asn-171. His-189 is a binding site for heme b. Thr-190 lines the Ca(2+) pocket. The N-linked (GlcNAc...) asparagine glycan is linked to Asn-205. Positions 236, 239, and 244 each coordinate Ca(2+).

This sequence belongs to the peroxidase family. Classical plant (class III) peroxidase subfamily. Requires heme b as cofactor. The cofactor is Ca(2+).

The protein resides in the secreted. It carries out the reaction H2O2 + AH2 = A + 2 H2O. Its function is as follows. Removal of H(2)O(2), oxidation of toxic reductants, biosynthesis and degradation of lignin, suberization, auxin catabolism, response to environmental stresses such as wounding, pathogen attack and oxidative stress. These functions might be dependent on each isozyme/isoform in each plant tissue. The protein is Peroxidase 22.3 of Oryza sativa subsp. japonica (Rice).